The following is a 240-amino-acid chain: uncharacterized protein (240 aa).

This sequence to H.influenzae HI_0575.

This is an uncharacterized protein from Escherichia coli (strain K12).